Here is a 408-residue protein sequence, read N- to C-terminus: Probable serine/threonine-protein kinase PBL16 (408 aa).

Gly-2 carries the N-myristoyl glycine lipid modification. Cys-4 carries the S-palmitoyl cysteine lipid modification. The segment at 17 to 50 (ANAKSESPKEQSPTVEDKHIKEVQKLPSNPKEVE) is disordered. Positions 18–30 (NAKSESPKEQSPT) are enriched in polar residues. The span at 31–40 (VEDKHIKEVQ) shows a compositional bias: basic and acidic residues. The residue at position 65 (Thr-65) is a Phosphothreonine. A Protein kinase domain is found at 76–360 (FRQDRVLGGG…DIVDSLEPLQ (285 aa)). ATP contacts are provided by residues 82 to 90 (LGGGGFGSV) and Lys-113. Tyr-159 is subject to Phosphotyrosine. Asp-209 (proton acceptor) is an active-site residue. Ser-213 and Ser-243 each carry phosphoserine. 2 positions are modified to phosphothreonine: Thr-244 and Thr-249. The residue at position 257 (Tyr-257) is a Phosphotyrosine.

This sequence belongs to the protein kinase superfamily. Ser/Thr protein kinase family. Post-translationally, palmitoylation at Cys-4 and Cys-6 are required for plasma membrane location.

Its subcellular location is the cell membrane. The catalysed reaction is L-seryl-[protein] + ATP = O-phospho-L-seryl-[protein] + ADP + H(+). It carries out the reaction L-threonyl-[protein] + ATP = O-phospho-L-threonyl-[protein] + ADP + H(+). Its function is as follows. May be involved in plant defense signaling. This Arabidopsis thaliana (Mouse-ear cress) protein is Probable serine/threonine-protein kinase PBL16.